Reading from the N-terminus, the 104-residue chain is MIVTTTNSVEGYQISEYKGIVVGEAIMGANVVRDVFAQITDIVGGRSGAYESKLQDARETALSELEDRARALGANAVVGVDLDYEVVGQSMLMVSASGTAVVIG.

The protein belongs to the UPF0145 family.

This chain is UPF0145 protein TM1040_1243, found in Ruegeria sp. (strain TM1040) (Silicibacter sp.).